The following is a 259-amino-acid chain: Phospholipase YtpA (259 aa).

The active-site Nucleophile is the serine 88. Active-site charge relay system residues include aspartate 206 and histidine 236.

The protein belongs to the AB hydrolase superfamily.

Its pathway is antibiotic biosynthesis; bacilysocin biosynthesis. Its function is as follows. Phospholipase involved in the biosynthesis of the antibiotic bacilysocin. It probably catalyzes the hydrolysis of the 2-sn-acyl moiety of phosphatidylglycerol to produce bacilysocin (lysophosphatidylglycerol). Is also able to catalyze the hydrolysis reaction of one acyl bond in phosphatidylcholine in vitro (actual cleavage point is unknown), resulting in lysophosphatidylcholine. The chain is Phospholipase YtpA (ytpA) from Bacillus subtilis (strain 168).